Reading from the N-terminus, the 237-residue chain is MADS-box protein GGM13 (237 aa).

An MADS-box domain is found at 1-61 (MGRGKIEIKR…GKLFEYSSAS (61 aa)). The K-box domain maps to 84–174 (NQHLYCEMTR…CRLLAEQQAA (91 aa)).

As to expression, expression specific for female reproductive structures: strong at the adaxial base of the cupules, where ovules will later develop, then in the outermost cell layer of the nucellus, in the inner envelope, and in the inner half of the middle envelope at late stage of ovule development.

Its subcellular location is the nucleus. Probable transcription factor. This Gnetum gnemon (Spanish joint-fir) protein is MADS-box protein GGM13 (GGM13).